A 280-amino-acid polypeptide reads, in one-letter code: Bifunctional protein FolD (280 aa).

NADP(+) is bound by residues 164-166, serine 189, and valine 230; that span reads GRS.

The protein belongs to the tetrahydrofolate dehydrogenase/cyclohydrolase family. As to quaternary structure, homodimer.

The enzyme catalyses (6R)-5,10-methylene-5,6,7,8-tetrahydrofolate + NADP(+) = (6R)-5,10-methenyltetrahydrofolate + NADPH. The catalysed reaction is (6R)-5,10-methenyltetrahydrofolate + H2O = (6R)-10-formyltetrahydrofolate + H(+). It functions in the pathway one-carbon metabolism; tetrahydrofolate interconversion. Its function is as follows. Catalyzes the oxidation of 5,10-methylenetetrahydrofolate to 5,10-methenyltetrahydrofolate and then the hydrolysis of 5,10-methenyltetrahydrofolate to 10-formyltetrahydrofolate. In Geotalea uraniireducens (strain Rf4) (Geobacter uraniireducens), this protein is Bifunctional protein FolD.